The primary structure comprises 419 residues: Gamma-glutamyl phosphate reductase (419 aa).

This sequence belongs to the gamma-glutamyl phosphate reductase family.

The protein localises to the cytoplasm. The catalysed reaction is L-glutamate 5-semialdehyde + phosphate + NADP(+) = L-glutamyl 5-phosphate + NADPH + H(+). It participates in amino-acid biosynthesis; L-proline biosynthesis; L-glutamate 5-semialdehyde from L-glutamate: step 2/2. Functionally, catalyzes the NADPH-dependent reduction of L-glutamate 5-phosphate into L-glutamate 5-semialdehyde and phosphate. The product spontaneously undergoes cyclization to form 1-pyrroline-5-carboxylate. This is Gamma-glutamyl phosphate reductase from Syntrophomonas wolfei subsp. wolfei (strain DSM 2245B / Goettingen).